A 201-amino-acid chain; its full sequence is MQTSPLLTQLMEALRCLPGVGPKSAQRMAFTLLQRDRSGGMRLAQALTRAMSEIGHCADCRTFTEQEVCNICSNPRRQENGQICVVESPADIYAIEQTGQYSGRYFVLMGHLSPLDGIGPDDIGLDRLEQRLEAESITEVILATNPTVEGEATANYIAELCAQYGVDASRIAHGVPVGGELEMVDGTTLSHSLAGRHKITF.

The C4-type zinc finger occupies 57-72 (CADCRTFTEQEVCNIC). The Toprim domain maps to 81–176 (GQICVVESPA…DASRIAHGVP (96 aa)).

The protein belongs to the RecR family.

Its function is as follows. May play a role in DNA repair. It seems to be involved in an RecBC-independent recombinational process of DNA repair. It may act with RecF and RecO. In Klebsiella pneumoniae subsp. pneumoniae (strain ATCC 700721 / MGH 78578), this protein is Recombination protein RecR.